A 571-amino-acid polypeptide reads, in one-letter code: MFSMSRKQHASMYGPTTGDRLRLADTGLFAEIEEDLTIAGEEAVFGGGKVVRVGMGQNGHRTREEDPDIPDTVITNVIVLDWSGIYKADIGIRDGIITGIGHAGNPDTMDGGTIPIGVSTDIIAGEGKVLTAGGIDTHIHFISPEQIEAALVSGITTMIGGGTGPSESTKATTITPGPWHIHQMLRSLDGFPMNIGLLGKGHATASAPLIDQIRAGAIGLKVHEDWGATPATIDLSLSVADEFDIQVAVHTDTLNEAGFVESTREAIGGRVIHTFHTEGAGGGHAPDIIALAGEPNVLPASTNPTLPYTVNTVEEHLDMLMVCHHLNPDVPEDVAFADSRIRTETIAAEDVLHDMGIFSITSSDSQAMGRVGEVIIRTWQVADSMKRQRGPLEGDTADSDNNRIKRYVAKYTINPALAQGISHVVGSVETGKFADLVLWEPKFFGVKPFMILKGGQVVNSIMGDAGASIPTPQPELYRPMFGSYGSATSSNSITFLPRVAIAAGIPEQLGLNRRIEECHGIRTLTKQSLKLNGETPSIHVDPETYEVRIDGALITCEPAEKLPLAQRYFLF.

Residues 133–571 (GGIDTHIHFI…LPLAQRYFLF (439 aa)) enclose the Urease domain. Residues His-138, His-140, and Lys-221 each contribute to the Ni(2+) site. Lys-221 carries the N6-carboxylysine modification. His-223 serves as a coordination point for substrate. Positions 250 and 276 each coordinate Ni(2+). His-324 (proton donor) is an active-site residue. Residue Asp-364 participates in Ni(2+) binding.

The protein belongs to the metallo-dependent hydrolases superfamily. Urease alpha subunit family. As to quaternary structure, heterotrimer of UreA (gamma), UreB (beta) and UreC (alpha) subunits. Three heterotrimers associate to form the active enzyme. Requires Ni cation as cofactor. Carboxylation allows a single lysine to coordinate two nickel ions.

It localises to the cytoplasm. It carries out the reaction urea + 2 H2O + H(+) = hydrogencarbonate + 2 NH4(+). The protein operates within nitrogen metabolism; urea degradation; CO(2) and NH(3) from urea (urease route): step 1/1. The sequence is that of Urease subunit alpha from Corynebacterium efficiens (strain DSM 44549 / YS-314 / AJ 12310 / JCM 11189 / NBRC 100395).